The sequence spans 124 residues: MATTNQLIRKGRTTLVEKSKVPALKACPQRRGVCTRVYTTTPKKPNSAMRKVCRVRLTSGFEVSSYIGGEGHNLQEHSVVLIRGGRVKDLPGVRYHTVRGSLDCAGVKDRNQSRSKYGTKRPKK.

At aspartate 89 the chain carries 3-methylthioaspartic acid.

The protein belongs to the universal ribosomal protein uS12 family. As to quaternary structure, part of the 30S ribosomal subunit. Contacts proteins S8 and S17. May interact with IF1 in the 30S initiation complex.

Functionally, with S4 and S5 plays an important role in translational accuracy. Its function is as follows. Interacts with and stabilizes bases of the 16S rRNA that are involved in tRNA selection in the A site and with the mRNA backbone. Located at the interface of the 30S and 50S subunits, it traverses the body of the 30S subunit contacting proteins on the other side and probably holding the rRNA structure together. The combined cluster of proteins S8, S12 and S17 appears to hold together the shoulder and platform of the 30S subunit. This Acinetobacter baylyi (strain ATCC 33305 / BD413 / ADP1) protein is Small ribosomal subunit protein uS12.